Consider the following 203-residue polypeptide: Holliday junction branch migration complex subunit RuvA (203 aa).

Positions 1 to 63 are domain I; sequence MIFSVRGEVL…EDSMTLYGFS (63 aa). A domain II region spans residues 64-141; sequence DAENRDLFLA…GPVGASGLTV (78 aa). The tract at residues 141 to 145 is flexible linker; that stretch reads VGTAA. A domain III region spans residues 146 to 203; that stretch reads DGNAVRGSVVEALVGLGFAAKQAEEATDQVLDGELGKDGAVATSSALRAALSLLGKTR.

Belongs to the RuvA family. Homotetramer. Forms an RuvA(8)-RuvB(12)-Holliday junction (HJ) complex. HJ DNA is sandwiched between 2 RuvA tetramers; dsDNA enters through RuvA and exits via RuvB. An RuvB hexamer assembles on each DNA strand where it exits the tetramer. Each RuvB hexamer is contacted by two RuvA subunits (via domain III) on 2 adjacent RuvB subunits; this complex drives branch migration. In the full resolvosome a probable DNA-RuvA(4)-RuvB(12)-RuvC(2) complex forms which resolves the HJ.

The protein localises to the cytoplasm. Functionally, the RuvA-RuvB-RuvC complex processes Holliday junction (HJ) DNA during genetic recombination and DNA repair, while the RuvA-RuvB complex plays an important role in the rescue of blocked DNA replication forks via replication fork reversal (RFR). RuvA specifically binds to HJ cruciform DNA, conferring on it an open structure. The RuvB hexamer acts as an ATP-dependent pump, pulling dsDNA into and through the RuvAB complex. HJ branch migration allows RuvC to scan DNA until it finds its consensus sequence, where it cleaves and resolves the cruciform DNA. The protein is Holliday junction branch migration complex subunit RuvA of Mycobacterium leprae (strain Br4923).